The chain runs to 421 residues: Gamma-glutamyl phosphate reductase (421 aa).

This sequence belongs to the gamma-glutamyl phosphate reductase family.

It localises to the cytoplasm. It carries out the reaction L-glutamate 5-semialdehyde + phosphate + NADP(+) = L-glutamyl 5-phosphate + NADPH + H(+). It participates in amino-acid biosynthesis; L-proline biosynthesis; L-glutamate 5-semialdehyde from L-glutamate: step 2/2. In terms of biological role, catalyzes the NADPH-dependent reduction of L-glutamate 5-phosphate into L-glutamate 5-semialdehyde and phosphate. The product spontaneously undergoes cyclization to form 1-pyrroline-5-carboxylate. The polypeptide is Gamma-glutamyl phosphate reductase (Acinetobacter baylyi (strain ATCC 33305 / BD413 / ADP1)).